Reading from the N-terminus, the 1129-residue chain is Serine/threonine-protein kinase LATS1 (1129 aa).

Residues 1–11 are compositionally biased toward basic and acidic residues; the sequence is MKRGEKPEGYR. The interval 1–71 is disordered; sequence MKRGEKPEGY…PRQVRNPPKF (71 aa). Residues 19–30 are compositionally biased toward polar residues; that stretch reads PASNYPGSSRQM. A compositionally biased stretch (basic and acidic residues) spans 46–64; sequence DASKAEHNLNKMSTEDPRQ. The 42-residue stretch at 100–141 folds into the UBA domain; sequence EVNPQMFQDLQAAGFDEDMVIQALQKTNNRSIEAAVEFISKM. Disordered stretches follow at residues 148–216 and 228–276; these read REQM…RPLS and PSNG…QTKR. The span at 235–268 shows a compositional bias: pro residues; it reads NPPPPPQVRSVTPPPPPRGQTPPPRGTTPPPPSW. Position 246 is a phosphothreonine (Thr246). The residue at position 278 (Ser278) is a Phosphoserine. Disordered regions lie at residues 292–317, 363–407, 432–492, and 513–630; these read PPGAWQEGYPPPPLTTSPMNPPSQAQ, PTGS…VPQS, WPQS…TPAP, and PTHP…ESRI. Residues 300-312 are compositionally biased toward pro residues; the sequence is YPPPPLTTSPMNP. The PPxY motif 1 signature appears at 372-375; sequence PPPY. Over residues 380–392 the composition is skewed to polar residues; it reads ANGQSPSALQTGA. Over residues 433–445 the composition is skewed to low complexity; that stretch reads PQSSSAPAQSSPS. The segment covering 453-481 has biased composition (polar residues); the sequence is WQPNIPVRSNSFNNPLGSRASHSANSQPS. Ser463 is subject to Phosphoserine; by NUAK1 and NUAK2. 2 stretches are compositionally biased toward low complexity: residues 482–492 and 520–530; these read ATTVTAITPAP and PQPVQTVQPTP. The segment at 525–654 is interaction with YAP1; the sequence is TVQPTPFSEG…HVENVLKSHQ (130 aa). The PPxY motif 2 signature appears at 555–558; it reads PPPY. Residues 578 to 608 show a composition bias toward basic and acidic residues; that stretch reads PCKDEQPSLPKEDDSEKSADSGDSGDKEKKQ. Position 612 is a phosphoserine (Ser612). Residues 620-629 show a composition bias toward basic and acidic residues; it reads KKDEERRESR. Residue Ser673 is modified to Phosphoserine. In terms of domain architecture, Protein kinase spans 704–1009; the sequence is FVKIKTLGIG…ADEIKAHPFF (306 aa). ATP is bound by residues 710 to 718 and Lys733; that span reads LGIGAFGEV. Asp827 (proton acceptor) is an active-site residue. Ser908 is subject to Phosphoserine; by STK3/MST2. An AGC-kinase C-terminal domain is found at 1010-1089; that stretch reads KTIDFSSDLR…RRFFDDNGYP (80 aa). Thr1078 carries the phosphothreonine; by STK3/MST2 modification. Positions 1104–1129 are disordered; the sequence is QGSEQQSDEDDQHTSSDGNNRDLVYV.

This sequence belongs to the protein kinase superfamily. AGC Ser/Thr protein kinase family. In terms of assembly, complexes with CDK1 in early mitosis. LATS1-associated CDK1 has no mitotic cyclin partner and no apparent kinase activity. Binds phosphorylated ZYX, locating this protein to the mitotic spindle and suggesting a role for actin regulatory proteins during mitosis. Binds to and colocalizes with LIMK1 at the actomyosin contractile ring during cytokinesis. Interacts (via PPxY motif 2) with YAP1 (via WW domains). Interacts with MOB1A and MOB1B. Interacts with LIMD1, WTIP and AJUBA. Interacts with ESR1, DCAF1 and DCAF13; probably recruits DCAF1 and DCAF13 to ESR1 to promote ESR1 ubiquitination and ubiquitin-mediated proteasomal degradation. Interacts with STK3/MST2; this interaction is inhibited in the presence of DLG5. Interacts with SCRIB in the presence of DLG5. Interacts with WWTR1/TAZ. Interacts with WWC1, WWC2 and WWC3 (via their WW domains). It depends on Mg(2+) as a cofactor. Autophosphorylated and phosphorylated during M-phase of the cell cycle. Phosphorylated by STK3/MST2 at Ser-908 and Thr-1078, which results in its activation. Phosphorylated by MAP4Ks; in parallel to STK3/MST2 and resulting to its activation. Phosphorylation at Ser-463 by NUAK1 and NUAK2 leads to decreased protein level and is required to regulate cellular senescence and cellular ploidy.

The protein resides in the cytoplasm. It localises to the cytoskeleton. It is found in the microtubule organizing center. Its subcellular location is the centrosome. The protein localises to the spindle. The protein resides in the midbody. It localises to the spindle pole body. The enzyme catalyses L-seryl-[protein] + ATP = O-phospho-L-seryl-[protein] + ADP + H(+). It catalyses the reaction L-threonyl-[protein] + ATP = O-phospho-L-threonyl-[protein] + ADP + H(+). Functionally, negative regulator of YAP1 in the Hippo signaling pathway that plays a pivotal role in organ size control and tumor suppression by restricting proliferation and promoting apoptosis. The core of this pathway is composed of a kinase cascade wherein STK3/MST2 and STK4/MST1, in complex with its regulatory protein SAV1, phosphorylates and activates LATS1/2 in complex with its regulatory protein MOB1, which in turn phosphorylates and inactivates YAP1 oncoprotein and WWTR1/TAZ. Phosphorylation of YAP1 by LATS1 inhibits its translocation into the nucleus to regulate cellular genes important for cell proliferation, cell death, and cell migration. Acts as a tumor suppressor which plays a critical role in maintenance of ploidy through its actions in both mitotic progression and the G1 tetraploidy checkpoint. Negatively regulates G2/M transition by down-regulating CDK1 kinase activity. Involved in the control of p53 expression. Affects cytokinesis by regulating actin polymerization through negative modulation of LIMK1. May also play a role in endocrine function. Plays a role in mammary gland epithelial cell differentiation, both through the Hippo signaling pathway and the intracellular estrogen receptor signaling pathway by promoting the degradation of ESR1. Acts as an activator of the NLRP3 inflammasome by mediating phosphorylation of 'Ser-265' of NLRP3 following NLRP3 palmitoylation, promoting NLRP3 activation by NEK7. The protein is Serine/threonine-protein kinase LATS1 of Mus musculus (Mouse).